Reading from the N-terminus, the 103-residue chain is MGIQKLRIALKAYETSLLNDSCTQIINAVETGGVKAIGPIPLPTKRRIYCVLRSPHVNKDAREHFEMRTHKKIIDVYKPTDDVMENLRKLDLAAGVDVEIKSL.

Belongs to the universal ribosomal protein uS10 family. As to quaternary structure, part of the 30S ribosomal subunit.

The protein localises to the plastid. It is found in the chloroplast. Involved in the binding of tRNA to the ribosomes. In Emiliania huxleyi (Coccolithophore), this protein is Small ribosomal subunit protein uS10c.